The following is a 314-amino-acid chain: Pectin lyase (314 aa).

Arg-202 is an active-site residue.

Belongs to the polysaccharide lyase 1 family.

It carries out the reaction Eliminative cleavage of (1-&gt;4)-alpha-D-galacturonan methyl ester to give oligosaccharides with 4-deoxy-6-O-methyl-alpha-D-galact-4-enuronosyl groups at their non-reducing ends.. The polypeptide is Pectin lyase (pnl) (Pectobacterium carotovorum (Erwinia carotovora)).